Consider the following 247-residue polypeptide: 2,3-bisphosphoglycerate-dependent phosphoglycerate mutase (247 aa).

Substrate-binding positions include Arg8–Asn15, Thr21–Gly22, Arg60, Glu87–Tyr90, Lys98, Arg114–Arg115, and Gly183–Asn184. His9 acts as the Tele-phosphohistidine intermediate in catalysis. Glu87 (proton donor/acceptor) is an active-site residue.

This sequence belongs to the phosphoglycerate mutase family. BPG-dependent PGAM subfamily. In terms of assembly, homodimer.

It catalyses the reaction (2R)-2-phosphoglycerate = (2R)-3-phosphoglycerate. It functions in the pathway carbohydrate degradation; glycolysis; pyruvate from D-glyceraldehyde 3-phosphate: step 3/5. Functionally, catalyzes the interconversion of 2-phosphoglycerate and 3-phosphoglycerate. The polypeptide is 2,3-bisphosphoglycerate-dependent phosphoglycerate mutase (Albidiferax ferrireducens (strain ATCC BAA-621 / DSM 15236 / T118) (Rhodoferax ferrireducens)).